We begin with the raw amino-acid sequence, 332 residues long: Terpene synthase 1 (332 aa).

Residues D81–A86 carry the DDxx(x)D/E motif motif. Residues N221 to E229 carry the NDxxSxxxD/E motif motif.

This sequence belongs to the terpene synthase family.

It carries out the reaction (2E,6E)-farnesyl diphosphate = (2S,3R,6S,9S)-(-)-protoillud-7-ene + diphosphate. In terms of biological role, terpene synthase that converts its substrate farnesyl diphosphate (FPP) into the sesquiterpene protoillud-7-ene. The protein is Terpene synthase 1 of Acytostelium subglobosum (Slime mold).